The sequence spans 249 residues: 3-deoxy-manno-octulosonate cytidylyltransferase (249 aa).

It belongs to the KdsB family.

Its subcellular location is the cytoplasm. The catalysed reaction is 3-deoxy-alpha-D-manno-oct-2-ulosonate + CTP = CMP-3-deoxy-beta-D-manno-octulosonate + diphosphate. Its pathway is nucleotide-sugar biosynthesis; CMP-3-deoxy-D-manno-octulosonate biosynthesis; CMP-3-deoxy-D-manno-octulosonate from 3-deoxy-D-manno-octulosonate and CTP: step 1/1. It functions in the pathway bacterial outer membrane biogenesis; lipopolysaccharide biosynthesis. Functionally, activates KDO (a required 8-carbon sugar) for incorporation into bacterial lipopolysaccharide in Gram-negative bacteria. This is 3-deoxy-manno-octulosonate cytidylyltransferase from Serratia proteamaculans (strain 568).